A 276-amino-acid chain; its full sequence is NADPH-dependent 7-cyano-7-deazaguanine reductase (276 aa).

Position 83-85 (83-85 (IES)) interacts with substrate. 85-86 (SK) serves as a coordination point for NADPH. The active-site Thioimide intermediate is Cys184. The active-site Proton donor is Asp191. 223 to 224 (HE) serves as a coordination point for substrate. Residue 252 to 253 (RG) participates in NADPH binding.

It belongs to the GTP cyclohydrolase I family. QueF type 2 subfamily. Homodimer.

The protein resides in the cytoplasm. The enzyme catalyses 7-aminomethyl-7-carbaguanine + 2 NADP(+) = 7-cyano-7-deazaguanine + 2 NADPH + 3 H(+). Its pathway is tRNA modification; tRNA-queuosine biosynthesis. Catalyzes the NADPH-dependent reduction of 7-cyano-7-deazaguanine (preQ0) to 7-aminomethyl-7-deazaguanine (preQ1). This chain is NADPH-dependent 7-cyano-7-deazaguanine reductase, found in Pseudomonas aeruginosa (strain ATCC 15692 / DSM 22644 / CIP 104116 / JCM 14847 / LMG 12228 / 1C / PRS 101 / PAO1).